A 351-amino-acid polypeptide reads, in one-letter code: MESSFQELYKKGLDIGEQQKQRQKELLKQQKLRRQQEQDDYRPLQNQEKPVPRKKSGKRSGHQKGIPYRPQLSEWLRHKPDDLNEWLLVPCPVGKRCLVVASKGITKAYSKGGWMFVNFRSSLPGDWQLQKGETILDCVYVEDADTFYVLDAISFGLQEVQECEASFRFYWLRARFEEHDYDKISENNEKKFKLLDHFDFEDPSAVEQALHKYPFFPENKPDLDGFLFYHKEASYVCRETPLVCWLFPFMMEDVLGLPVNKCYKAPEDYQPSHVLQYMDAFEQKLAEHRRTLKEQKKKVNEQKEDPHTMEAEEDVESDEYDSLKRVLDQQRRLELGEFDMDCAEPPSADGC.

Disordered regions lie at residues 1 to 66 and 294 to 322; these read MESS…QKGI and EQKK…EYDS. Over residues 8–42 the composition is skewed to basic and acidic residues; that stretch reads LYKKGLDIGEQQKQRQKELLKQQKLRRQQEQDDYR. The segment covering 52-62 has biased composition (basic residues); sequence PRKKSGKRSGH. The stretch at 274 to 330 forms a coiled coil; it reads VLQYMDAFEQKLAEHRRTLKEQKKKVNEQKEDPHTMEAEEDVESDEYDSLKRVLDQQ. The span at 294-310 shows a compositional bias: basic and acidic residues; it reads EQKKKVNEQKEDPHTME. Residues 311–320 show a composition bias toward acidic residues; that stretch reads AEEDVESDEY.

The protein belongs to the snurportin family. As to quaternary structure, interacts with components of the snRNP complex including SmB and Smn; these interactions are RNA-dependent. Interacts with importin-7 msk but not with importin subunit beta Fs(2)Ket; the interaction is RNA-dependent.

It localises to the nucleus. The protein resides in the cytoplasm. It is found in the U-body. Its subcellular location is the nucleus speckle. The protein localises to the cajal body. In terms of biological role, functions as an U snRNP-specific nuclear import adapter. Involved in the trimethylguanosine (m3G)-cap-dependent nuclear import of U snRNPs. Binds specifically to the terminal m3G-cap U snRNAs. This chain is Snurportin-1, found in Drosophila melanogaster (Fruit fly).